Reading from the N-terminus, the 116-residue chain is Large ribosomal subunit protein uL22c (116 aa).

The protein belongs to the universal ribosomal protein uL22 family. Part of the 50S ribosomal subunit.

The protein localises to the plastid. It is found in the chloroplast. This protein binds specifically to 23S rRNA. In terms of biological role, the globular domain of the protein is located near the polypeptide exit tunnel on the outside of the subunit, while an extended beta-hairpin is found that lines the wall of the exit tunnel in the center of the 70S ribosome. The chain is Large ribosomal subunit protein uL22c (rpl22) from Porphyra purpurea (Red seaweed).